We begin with the raw amino-acid sequence, 130 residues long: Methylglyoxal synthase (130 aa).

The MGS-like domain occupies 1 to 130 (MSKPRIALIA…DLARNMQDVC (130 aa)). Substrate is bound by residues His-11, Lys-15, 37–40 (TGTT), and 57–58 (SG). Asp-63 (proton donor/acceptor) is an active-site residue. His-90 provides a ligand contact to substrate.

This sequence belongs to the methylglyoxal synthase family.

The enzyme catalyses dihydroxyacetone phosphate = methylglyoxal + phosphate. In terms of biological role, catalyzes the formation of methylglyoxal from dihydroxyacetone phosphate. In Burkholderia ambifaria (strain MC40-6), this protein is Methylglyoxal synthase.